Reading from the N-terminus, the 324-residue chain is tRNA dimethylallyltransferase (324 aa).

17–24 (GPTASGKT) lines the ATP pocket. 19 to 24 (TASGKT) provides a ligand contact to substrate. 4 interaction with substrate tRNA regions span residues 42-45 (DSAL), 166-170 (QRIQR), 251-256 (RCVGYR), and 284-291 (KRQITWLR).

This sequence belongs to the IPP transferase family. As to quaternary structure, monomer. Mg(2+) is required as a cofactor.

It catalyses the reaction adenosine(37) in tRNA + dimethylallyl diphosphate = N(6)-dimethylallyladenosine(37) in tRNA + diphosphate. Its function is as follows. Catalyzes the transfer of a dimethylallyl group onto the adenine at position 37 in tRNAs that read codons beginning with uridine, leading to the formation of N6-(dimethylallyl)adenosine (i(6)A). The sequence is that of tRNA dimethylallyltransferase from Burkholderia orbicola (strain MC0-3).